A 297-amino-acid chain; its full sequence is 4-hydroxy-tetrahydrodipicolinate synthase (297 aa).

T49 serves as a coordination point for pyruvate. The active-site Proton donor/acceptor is the Y137. Residue K166 is the Schiff-base intermediate with substrate of the active site. I208 provides a ligand contact to pyruvate.

It belongs to the DapA family. Homotetramer; dimer of dimers.

The protein localises to the cytoplasm. The enzyme catalyses L-aspartate 4-semialdehyde + pyruvate = (2S,4S)-4-hydroxy-2,3,4,5-tetrahydrodipicolinate + H2O + H(+). It functions in the pathway amino-acid biosynthesis; L-lysine biosynthesis via DAP pathway; (S)-tetrahydrodipicolinate from L-aspartate: step 3/4. Functionally, catalyzes the condensation of (S)-aspartate-beta-semialdehyde [(S)-ASA] and pyruvate to 4-hydroxy-tetrahydrodipicolinate (HTPA). The chain is 4-hydroxy-tetrahydrodipicolinate synthase from Chlorobium phaeobacteroides (strain BS1).